A 300-amino-acid polypeptide reads, in one-letter code: GTPase Era (300 aa).

The Era-type G domain maps to 4-173 (KYGIVAIVGK…INTIKNYLHK (170 aa)). A G1 region spans residues 12-19 (GKPNVGKS). Position 12–19 (12–19 (GKPNVGKS)) interacts with GTP. The tract at residues 38 to 42 (QTTRN) is G2. Positions 59–62 (DTPG) are G3. GTP-binding positions include 59–63 (DTPGF) and 122–125 (SKAE). Residues 122-125 (SKAE) form a G4 region. Residues 152 to 154 (ISA) form a G5 region. The KH type-2 domain occupies 204-282 (LNHEVPHGVG…SLTIFVKVEN (79 aa)).

Belongs to the TRAFAC class TrmE-Era-EngA-EngB-Septin-like GTPase superfamily. Era GTPase family. Monomer.

It localises to the cytoplasm. The protein localises to the cell membrane. Its function is as follows. An essential GTPase that binds both GDP and GTP, with rapid nucleotide exchange. Plays a role in 16S rRNA processing and 30S ribosomal subunit biogenesis and possibly also in cell cycle regulation and energy metabolism. This chain is GTPase Era, found in Ureaplasma parvum serovar 3 (strain ATCC 27815 / 27 / NCTC 11736).